The chain runs to 282 residues: MRIAVPNKGRLHDPTLALLDRAGIGVEDGADRQLYADTVDPALTVLYARAADIPEYVADGAADAGITGHDQLRESDVDCVEERLDLNYGSCRLVLAAPEDGDVTAPADLDGATVATEFPTITRAYFADTTATPEIVEVTGATELTPHVEMADAIVDITSTGTTLRVNRLQVVDEVLSSSVRLFAHEDVHDDPKVQQVETALRSVLDAHGKRYVMLNAPADRLDDVKAVLPGLGGPTVLDVDEPGTVAVHAVVPERDVFEAISELKAVGASGILVTEIERLVD.

The protein belongs to the ATP phosphoribosyltransferase family. Long subfamily. Requires Mg(2+) as cofactor.

The protein localises to the cytoplasm. It carries out the reaction 1-(5-phospho-beta-D-ribosyl)-ATP + diphosphate = 5-phospho-alpha-D-ribose 1-diphosphate + ATP. It participates in amino-acid biosynthesis; L-histidine biosynthesis; L-histidine from 5-phospho-alpha-D-ribose 1-diphosphate: step 1/9. Its activity is regulated as follows. Feedback inhibited by histidine. Functionally, catalyzes the condensation of ATP and 5-phosphoribose 1-diphosphate to form N'-(5'-phosphoribosyl)-ATP (PR-ATP). Has a crucial role in the pathway because the rate of histidine biosynthesis seems to be controlled primarily by regulation of HisG enzymatic activity. The protein is ATP phosphoribosyltransferase of Halobacterium salinarum (strain ATCC 29341 / DSM 671 / R1).